Consider the following 336-residue polypeptide: Dihydroorotate dehydrogenase (quinone) (336 aa).

FMN contacts are provided by residues 62-66 (AGLDK) and T86. K66 provides a ligand contact to substrate. 111 to 115 (NRFGF) is a binding site for substrate. Residues N139 and N172 each coordinate FMN. N172 is a binding site for substrate. S175 functions as the Nucleophile in the catalytic mechanism. Residue N177 coordinates substrate. Residues K217 and T245 each contribute to the FMN site. 246 to 247 (NT) is a substrate binding site. Residues G268, G297, and 318–319 (YS) contribute to the FMN site.

Belongs to the dihydroorotate dehydrogenase family. Type 2 subfamily. In terms of assembly, monomer. It depends on FMN as a cofactor.

The protein resides in the cell membrane. It carries out the reaction (S)-dihydroorotate + a quinone = orotate + a quinol. It participates in pyrimidine metabolism; UMP biosynthesis via de novo pathway; orotate from (S)-dihydroorotate (quinone route): step 1/1. Functionally, catalyzes the conversion of dihydroorotate to orotate with quinone as electron acceptor. This is Dihydroorotate dehydrogenase (quinone) from Photobacterium profundum (strain SS9).